The primary structure comprises 288 residues: Bis(5'-nucleosyl)-tetraphosphatase, symmetrical (288 aa).

Belongs to the Ap4A hydrolase family.

The catalysed reaction is P(1),P(4)-bis(5'-adenosyl) tetraphosphate + H2O = 2 ADP + 2 H(+). Hydrolyzes diadenosine 5',5'''-P1,P4-tetraphosphate to yield ADP. This chain is Bis(5'-nucleosyl)-tetraphosphatase, symmetrical, found in Pseudomonas putida (strain GB-1).